A 60-amino-acid polypeptide reads, in one-letter code: Cytotoxin SP15c (60 aa).

Disulfide bonds link Cys-3–Cys-21, Cys-14–Cys-38, Cys-42–Cys-53, and Cys-54–Cys-59.

It belongs to the three-finger toxin family. Short-chain subfamily. Type IA cytotoxin sub-subfamily. In terms of assembly, monomer in solution; Homodimer and oligomer in the presence of negatively charged lipids forming a pore with a size ranging between 20 and 30 Angstroms. In terms of tissue distribution, expressed by the venom gland.

It is found in the secreted. The protein resides in the target cell membrane. Its function is as follows. Shows cytolytic activity on many different cells by forming pore in lipid membranes. In vivo, increases heart rate or kills the animal by cardiac arrest. In addition, it binds to heparin with high affinity, interacts with Kv channel-interacting protein 1 (KCNIP1) in a calcium-independent manner, and binds to integrin alpha-V/beta-3 (ITGAV/ITGB3) with moderate affinity. This Naja atra (Chinese cobra) protein is Cytotoxin SP15c.